The chain runs to 504 residues: Catalase (504 aa).

Residues H56 and N129 contribute to the active site. Y339 serves as a coordination point for heme.

Belongs to the catalase family. As to quaternary structure, homodimer. It depends on heme as a cofactor.

The enzyme catalyses 2 H2O2 = O2 + 2 H2O. In terms of biological role, decomposes hydrogen peroxide into water and oxygen; serves to protect cells from the toxic effects of hydrogen peroxide. This chain is Catalase (katA), found in Staphylococcus epidermidis.